The sequence spans 491 residues: Anthranilate synthase component 1 (491 aa).

L-tryptophan contacts are provided by residues Ser49 and 271 to 273 (PYL). Residue 306 to 307 (GT) coordinates chorismate. Position 333 (Glu333) interacts with Mg(2+). Chorismate is bound by residues Tyr421, Arg441, 455–457 (GAG), and Gly457. Glu470 is a Mg(2+) binding site.

Belongs to the anthranilate synthase component I family. Heterotetramer consisting of two non-identical subunits: a beta subunit (TrpG) and a large alpha subunit (TrpE). Mg(2+) serves as cofactor.

It catalyses the reaction chorismate + L-glutamine = anthranilate + pyruvate + L-glutamate + H(+). It participates in amino-acid biosynthesis; L-tryptophan biosynthesis; L-tryptophan from chorismate: step 1/5. With respect to regulation, feedback inhibited by tryptophan. Part of a heterotetrameric complex that catalyzes the two-step biosynthesis of anthranilate, an intermediate in the biosynthesis of L-tryptophan. In the first step, the glutamine-binding beta subunit (TrpG) of anthranilate synthase (AS) provides the glutamine amidotransferase activity which generates ammonia as a substrate that, along with chorismate, is used in the second step, catalyzed by the large alpha subunit of AS (TrpE) to produce anthranilate. In the absence of TrpG, TrpE can synthesize anthranilate directly from chorismate and high concentrations of ammonia. This Neisseria gonorrhoeae (strain ATCC 700825 / FA 1090) protein is Anthranilate synthase component 1 (trpE).